A 205-amino-acid chain; its full sequence is Urease accessory protein UreG (205 aa).

14–21 is a GTP binding site; it reads GPVGSGKT.

As to quaternary structure, homodimer. UreD, UreF and UreG form a complex that acts as a GTP-hydrolysis-dependent molecular chaperone, activating the urease apoprotein by helping to assemble the nickel containing metallocenter of UreC. The UreE protein probably delivers the nickel.

The protein localises to the cytoplasm. Activation of apourease within the UreDFG-apoprotein complex is inhibited by zinc, copper and cobalt. Its function is as follows. Facilitates the functional incorporation of the urease nickel metallocenter. This process requires GTP hydrolysis, probably effectuated by UreG. The protein is Urease accessory protein UreG of Klebsiella aerogenes (Enterobacter aerogenes).